A 266-amino-acid chain; its full sequence is MTRIILILTATFFACALGASTGGSHPLRPWWNALRSSGRIVGGFEVPVEEVPFQVSLSGVGSSHFCGGSLLSERWVMTAGHCAASGQTNLQVRIGSSQHASGGQLIKVKKVNRHPKYDEVTTDYDFALLELEETVTFSDSCAPVKLPQKDAPVNEGTCLQVSGWGNTQNPSESSEVLRAAYVPAVSQKECHKAYLSFGGVTDRMVCAGFKEGGKDSCQGDSGGPLVHDNTLVGVVSWGYGCAQAGYPGVYARVASVRDWVKEVSGL.

The signal sequence occupies residues Met-1 to Gly-18. The propeptide at Ala-19–Arg-39 is activation peptide. The region spanning Ile-40–Gly-265 is the Peptidase S1 domain. The cysteines at positions 66 and 82 are disulfide-linked. Residues His-81 and Asp-125 each act as charge relay system in the active site. 2 cysteine pairs are disulfide-bonded: Cys-190/Cys-206 and Cys-217/Cys-241. Residue Ser-221 is the Charge relay system of the active site.

Belongs to the peptidase S1 family. Midgut.

It localises to the secreted. It is found in the extracellular space. The catalysed reaction is Preferential cleavage: Arg-|-Xaa, Lys-|-Xaa.. Major function may be to aid in digestion of the blood meal. The sequence is that of Trypsin 5G1 from Aedes aegypti (Yellowfever mosquito).